Reading from the N-terminus, the 346-residue chain is O-methyltransferase atr3 (346 aa).

Disordered stretches follow at residues 1-22 and 52-88; these read MTSVDTMPPPMVRLESQPDDLM and GLKSHPVVTTGTEKTGVMPPLQPESKKNNKGVPWYHA. S-adenosyl-L-methionine contacts are provided by residues 190–191 and 217–218; these read DL and DI.

Belongs to the class I-like SAM-binding methyltransferase superfamily. Homodimer.

The enzyme catalyses 4-O-demethylbarbatate + S-adenosyl-L-methionine = proatranorin I + S-adenosyl-L-homocysteine. It functions in the pathway secondary metabolite biosynthesis; terpenoid biosynthesis. Its function is as follows. O-methyltransferase; part of the gene cluster that mediates the biosynthesis of atranorin, a depside of polyketide origin that accumulates in the cortical or medullary layers of lichen thalli. Atr3 methylates the carboxyl group of 4-O-demethylbarbatic acid to yield proatranorin I. Atr3 is also able to methylate the atr2 product proatranorin III to produce the final compound atranorin. The first step in the pathway is performed by the non-reducing polyketide synthase atr1 that produces 4-O-demethylbarbatic acid composed of two 3-methylorsellinic acid (3MOA) moieties. The pathway continues with the actions of the cytochrome P450 monooygenase atr2 that catalizes the oxidation of c-9 and the O-methyltransferase atr3 that performs the methylation of the carboxyl group to yield atranorin, via the proatranorin II and III intermediates if atr2 acts first, or the proatranorin I intermediate if atr3 acts first. This is O-methyltransferase atr3 from Stereocaulon alpinum (Alpine snow lichen).